The chain runs to 320 residues: Atrochrysone carboxyl ACP thioesterase (320 aa).

Positions 103, 105, 107, and 108 each coordinate Zn(2+). Asp-107 functions as the Proton donor/acceptor in the catalytic mechanism.

Belongs to the metallo-beta-lactamase superfamily. It depends on Zn(2+) as a cofactor.

The enzyme catalyses atrochrysone carboxyl-[ACP] + H2O = atrochrysone carboxylate + holo-[ACP] + H(+). It participates in secondary metabolite biosynthesis. Functionally, atrochrysone carboxyl ACP thioesterase; part of the gene cluster that mediates the biosynthesis of geodin, an intermediate in the biosynthesis of other natural products. The pathway begins with the synthesis of atrochrysone thioester by the polyketide synthase (PKS) gedC. The atrochrysone carboxyl ACP thioesterase gedB then breaks the thioester bond and releases the atrochrysone carboxylic acid from gedC. The atrochrysone carboxylic acid is then converted to atrochrysone which is further transformed into emodinanthrone. The next step is performed by the emodinanthrone oxygenase gedH that catalyzes the oxidation of emodinanthrone to emodin. Emodin O-methyltransferase encoded probably by gedA then catalyzes methylation of the 8-hydroxy group of emodin to form questin. Ring cleavage of questin by questin oxidase gedK leads to desmethylsulochrin via several intermediates including questin epoxide. Another methylation step probably catalyzed by methyltransferase gedG leads to the formation of sulochrin which is further converted to dihydrogeodin by the sulochrin halogenase gedL. Finally, the dihydrogeodin oxidase gedJ catalyzes the stereospecific phenol oxidative coupling reaction converting dihydrogeodin to geodin. The chain is Atrochrysone carboxyl ACP thioesterase from Aspergillus terreus (strain NIH 2624 / FGSC A1156).